The chain runs to 369 residues: Probable dual-specificity RNA methyltransferase RlmN (369 aa).

The Proton acceptor role is filled by Glu-108. The Radical SAM core domain occupies 114–352; that stretch reads YPDRATLCIS…CTVRDTKGQE (239 aa). A disulfide bridge connects residues Cys-121 and Cys-357. [4Fe-4S] cluster is bound by residues Cys-128, Cys-132, and Cys-135. S-adenosyl-L-methionine is bound by residues 178–179, Ser-212, 235–237, and Asn-314; these read GE and SLH. Cys-357 serves as the catalytic S-methylcysteine intermediate.

The protein belongs to the radical SAM superfamily. RlmN family. It depends on [4Fe-4S] cluster as a cofactor.

Its subcellular location is the cytoplasm. The enzyme catalyses adenosine(2503) in 23S rRNA + 2 reduced [2Fe-2S]-[ferredoxin] + 2 S-adenosyl-L-methionine = 2-methyladenosine(2503) in 23S rRNA + 5'-deoxyadenosine + L-methionine + 2 oxidized [2Fe-2S]-[ferredoxin] + S-adenosyl-L-homocysteine. The catalysed reaction is adenosine(37) in tRNA + 2 reduced [2Fe-2S]-[ferredoxin] + 2 S-adenosyl-L-methionine = 2-methyladenosine(37) in tRNA + 5'-deoxyadenosine + L-methionine + 2 oxidized [2Fe-2S]-[ferredoxin] + S-adenosyl-L-homocysteine. Functionally, specifically methylates position 2 of adenine 2503 in 23S rRNA and position 2 of adenine 37 in tRNAs. This Corynebacterium efficiens (strain DSM 44549 / YS-314 / AJ 12310 / JCM 11189 / NBRC 100395) protein is Probable dual-specificity RNA methyltransferase RlmN.